The following is an 89-amino-acid chain: UPF0297 protein SEQ_2150 (89 aa).

The protein belongs to the UPF0297 family.

The polypeptide is UPF0297 protein SEQ_2150 (Streptococcus equi subsp. equi (strain 4047)).